Here is a 72-residue protein sequence, read N- to C-terminus: ATP synthase subunit c (72 aa).

2 helical membrane passes run 5 to 25 (LLAAGIAVLAGIGAGIGIGIA) and 51 to 71 (AGLSEATAIYGLVVSIILLFV).

Belongs to the ATPase C chain family. F-type ATPases have 2 components, F(1) - the catalytic core - and F(0) - the membrane proton channel. F(1) has five subunits: alpha(3), beta(3), gamma(1), delta(1), epsilon(1). F(0) has three main subunits: a(1), b(2) and c(10-14). The alpha and beta chains form an alternating ring which encloses part of the gamma chain. F(1) is attached to F(0) by a central stalk formed by the gamma and epsilon chains, while a peripheral stalk is formed by the delta and b chains.

It is found in the cell membrane. Its function is as follows. F(1)F(0) ATP synthase produces ATP from ADP in the presence of a proton or sodium gradient. F-type ATPases consist of two structural domains, F(1) containing the extramembraneous catalytic core and F(0) containing the membrane proton channel, linked together by a central stalk and a peripheral stalk. During catalysis, ATP synthesis in the catalytic domain of F(1) is coupled via a rotary mechanism of the central stalk subunits to proton translocation. Functionally, key component of the F(0) channel; it plays a direct role in translocation across the membrane. A homomeric c-ring of between 10-14 subunits forms the central stalk rotor element with the F(1) delta and epsilon subunits. This Clostridium perfringens (strain ATCC 13124 / DSM 756 / JCM 1290 / NCIMB 6125 / NCTC 8237 / Type A) protein is ATP synthase subunit c.